Consider the following 218-residue polypeptide: MGQKINPLGFRLGTTQSHRSFWFAQPKNYSKGLQEDEKIRDCIKNYVQKHMRISSGFEGIARIDIKKRIDLIQVIIHIGFANMLMEGRARGIEELQTNVQKSFHSVNRRLNIAIARVARPYGQPNILAEYIALQLKNRVSFRKAMKKAIELAEQADAKGIQVQIAGRLNGNEIARVEWIREGRVPLQTIRVKIDHCSYPVRTIYGVLGIKIWIFLDEE.

Positions 47-118 (VQKHMRISSG…RLNIAIARVA (72 aa)) constitute a KH type-2 domain.

Belongs to the universal ribosomal protein uS3 family. In terms of assembly, part of the 30S ribosomal subunit.

It is found in the plastid. Its subcellular location is the chloroplast. The chain is Small ribosomal subunit protein uS3c (rps3) from Nymphaea alba (White water-lily).